Reading from the N-terminus, the 222-residue chain is Thiamine-phosphate synthase (222 aa).

4-amino-2-methyl-5-(diphosphooxymethyl)pyrimidine contacts are provided by residues 44–48 (QFREK) and Asn79. Mg(2+) is bound by residues Asp80 and Asp99. Ser117 serves as a coordination point for 4-amino-2-methyl-5-(diphosphooxymethyl)pyrimidine. 143–145 (TET) contributes to the 2-[(2R,5Z)-2-carboxy-4-methylthiazol-5(2H)-ylidene]ethyl phosphate binding site. Residue Lys146 coordinates 4-amino-2-methyl-5-(diphosphooxymethyl)pyrimidine. 2-[(2R,5Z)-2-carboxy-4-methylthiazol-5(2H)-ylidene]ethyl phosphate contacts are provided by residues Gly175 and 195 to 196 (IS).

This sequence belongs to the thiamine-phosphate synthase family. As to quaternary structure, monomer. Requires Mg(2+) as cofactor.

The enzyme catalyses 2-[(2R,5Z)-2-carboxy-4-methylthiazol-5(2H)-ylidene]ethyl phosphate + 4-amino-2-methyl-5-(diphosphooxymethyl)pyrimidine + 2 H(+) = thiamine phosphate + CO2 + diphosphate. It carries out the reaction 2-(2-carboxy-4-methylthiazol-5-yl)ethyl phosphate + 4-amino-2-methyl-5-(diphosphooxymethyl)pyrimidine + 2 H(+) = thiamine phosphate + CO2 + diphosphate. It catalyses the reaction 4-methyl-5-(2-phosphooxyethyl)-thiazole + 4-amino-2-methyl-5-(diphosphooxymethyl)pyrimidine + H(+) = thiamine phosphate + diphosphate. The protein operates within cofactor biosynthesis; thiamine diphosphate biosynthesis; thiamine phosphate from 4-amino-2-methyl-5-diphosphomethylpyrimidine and 4-methyl-5-(2-phosphoethyl)-thiazole: step 1/1. In terms of biological role, condenses 4-methyl-5-(beta-hydroxyethyl)thiazole monophosphate (THZ-P) and 2-methyl-4-amino-5-hydroxymethyl pyrimidine pyrophosphate (HMP-PP) to form thiamine monophosphate (TMP). Is also able to use the 2-methoxy analog MeO-HMP-PP, as substrate in vitro, but not the 2-trifluoromethyl analog CF(3)-HMP-PP. The chain is Thiamine-phosphate synthase (thiE) from Bacillus subtilis (strain 168).